The sequence spans 216 residues: MARSKTSHNWLKEHFDDKYVKMAQKDGYRSRASYKLLEIQEKDKLIRPGMTVIDLGAAPGGWSQVTSRLIGGQGRLIASDILEMDSIPDVTFIQGDFTEDKILEQILEAVGNTQVDLVISDMAPNMSGLSAVDMPRAMFLCELALDLAGRVLRPGGDFLIKVFQGEGFDVYHKDIRKLFDKVQMRKPSSSRDRSREQYLLARGFRGIDGAASIERF.

Positions 60, 62, 80, 96, and 121 each coordinate S-adenosyl-L-methionine. K161 acts as the Proton acceptor in catalysis.

This sequence belongs to the class I-like SAM-binding methyltransferase superfamily. RNA methyltransferase RlmE family.

Its subcellular location is the cytoplasm. It carries out the reaction uridine(2552) in 23S rRNA + S-adenosyl-L-methionine = 2'-O-methyluridine(2552) in 23S rRNA + S-adenosyl-L-homocysteine + H(+). Functionally, specifically methylates the uridine in position 2552 of 23S rRNA at the 2'-O position of the ribose in the fully assembled 50S ribosomal subunit. The polypeptide is Ribosomal RNA large subunit methyltransferase E (Pseudomonas savastanoi pv. phaseolicola (strain 1448A / Race 6) (Pseudomonas syringae pv. phaseolicola (strain 1448A / Race 6))).